Here is a 261-residue protein sequence, read N- to C-terminus: Putative carbamate hydrolase RutD (261 aa).

The AB hydrolase-1 domain occupies 14 to 119 (PTILLSSGLG…LINAWSKADP (106 aa)).

Belongs to the AB hydrolase superfamily. Hydrolase RutD family.

The catalysed reaction is carbamate + 2 H(+) = NH4(+) + CO2. Its function is as follows. Involved in pyrimidine catabolism. May facilitate the hydrolysis of carbamate, a reaction that can also occur spontaneously. The sequence is that of Putative carbamate hydrolase RutD from Agrobacterium fabrum (strain C58 / ATCC 33970) (Agrobacterium tumefaciens (strain C58)).